Here is a 283-residue protein sequence, read N- to C-terminus: Endochitinase At2g43620 (283 aa).

The N-terminal stretch at 1 to 28 (MATLRAMLKNAFILFLFTLTIMAKTVFS) is a signal peptide. The Chitin-binding type-1 domain maps to 29–66 (QQCGTTGCAANLCCSRYGYCGTTDAYCGTGCRSGPCSS). Disulfide bonds link cysteine 31/cysteine 42, cysteine 36/cysteine 48, cysteine 41/cysteine 55, and cysteine 59/cysteine 64. Residues 88 to 283 (DTIENVVTPA…GITPGANLSC (196 aa)) are catalytic. Glutamate 150 functions as the Proton donor in the catalytic mechanism. Asparagine 280 carries N-linked (GlcNAc...) asparagine glycosylation.

This sequence belongs to the glycosyl hydrolase 19 family. Chitinase class I subfamily.

The catalysed reaction is Random endo-hydrolysis of N-acetyl-beta-D-glucosaminide (1-&gt;4)-beta-linkages in chitin and chitodextrins.. This Arabidopsis thaliana (Mouse-ear cress) protein is Endochitinase At2g43620.